Consider the following 489-residue polypeptide: Ubiquitin-like-specific protease ESD4 (489 aa).

The segment at 43–66 (AMSEDSGKPASSNPTISRISRYPD) is disordered. Residues 51–60 (PASSNPTISR) are compositionally biased toward polar residues. A coiled-coil region spans residues 200-223 (ASSLEAYRKLMQSAEKRNSKLEAL). Active-site residues include histidine 380, aspartate 397, and cysteine 448.

This sequence belongs to the peptidase C48 family. Interacts with NUA (via N-terminus). Interacts with KIN10. As to expression, expressed in seedlings, leaves, shoots, flowers and roots.

It is found in the nucleus membrane. The enzyme catalyses Hydrolysis of the alpha-linked peptide bond in the sequence Gly-Gly-|-Ala-Thr-Tyr at the C-terminal end of the small ubiquitin-like modifier (SUMO) propeptide, Smt3, leading to the mature form of the protein. A second reaction involves the cleavage of an epsilon-linked peptide bond between the C-terminal glycine of the mature SUMO and the lysine epsilon-amino group of the target protein.. Its activity is regulated as follows. Inhibited by thiol reagent and N-ethylmaleimide, but not by ubiquitin aldehyde, pepstatin A or benzamidine HCl. Protease that catalyzes two essential functions in the SUMO pathway: processing of full-length SUMOs to their mature forms and deconjugation of SUMO from targeted proteins. Cleaves precursors of SUM1 and SUM2, but not of SUM3 or SUM5. Able to release SUM1 and SUM2 from conjugates, but unable to cleave SUM3. Acts predominantly as an isopeptidase, cleaving SUMO-conjugated proteins better than SUMO peptides. Plays an important role in the control of flowering time. This is Ubiquitin-like-specific protease ESD4 (ESD4) from Arabidopsis thaliana (Mouse-ear cress).